We begin with the raw amino-acid sequence, 301 residues long: MKIYILGAGAIGSLVGGLLANVGEDVTLIGRGRHIEAINKRGLMIEGLTNLKINTKATTSIPGAKPDLIILTTKSYSTDDALNSAKDIVRDTWVLSLQNGIGNEEKIMELGGRPIGGITTNGAVLKEPGVVEWRGRGITLIGLYPKGRNEFVEEVKETFNRAGLETEVTENIIGWKWAKTIVNSAINPIGAILEVKNGAIKDNDYLLSIAVEVVKEGCKIALQNGIKFDISPMELLIQTLEQTRENYNSMLQDIWRGKRTEIDFINGKIIEYAKLVNLEAPLNFLLWALVKAKESLGGGSK.

NADP(+)-binding positions include 7 to 12 (GAGAIG), Lys-74, Asn-99, and Ala-123. Residue Lys-179 is the Proton donor of the active site. Residues Lys-179, Asn-183, Asn-187, Asn-197, and 246–249 (NYNS) contribute to the substrate site. Glu-261 is a binding site for NADP(+).

It belongs to the ketopantoate reductase family.

The protein resides in the cytoplasm. The enzyme catalyses (R)-pantoate + NAD(+) = 2-dehydropantoate + NADH + H(+). It carries out the reaction (R)-pantoate + NADP(+) = 2-dehydropantoate + NADPH + H(+). It participates in cofactor biosynthesis; coenzyme A biosynthesis. In terms of biological role, catalyzes the NAD(P)H-dependent reduction of ketopantoate into pantoic acid. This is 2-dehydropantoate 2-reductase from Pyrococcus horikoshii (strain ATCC 700860 / DSM 12428 / JCM 9974 / NBRC 100139 / OT-3).